A 106-amino-acid polypeptide reads, in one-letter code: Transcriptional and immune response regulator (106 aa).

Monomer. Interacts with NOTCH2 (via ANK repeats), the interaction inhibits the nuclear translocation of NOTCH2 N2ICD. Interacts (C-terminus) with CBY1 (C-terminus), TCIM competes with CTNNB1 for the interaction with CBY1. Expressed in liver, expression levels decrease in regenerating liver. In bone marrow, expressed in large progenitor-like cells, cells with ring-shaped nuclei and, at lower, levels in hematopietic stem cell-like cells with round nuclei (at protein level).

It is found in the cytoplasm. It localises to the nucleus. The protein resides in the nucleolus. The protein localises to the nucleus speckle. In terms of biological role, seems to be involved in the regulation of cell growth an differentiation, may play different and opposite roles depending on the tissue or cell type. May enhance the WNT-CTNNB1 pathway by relieving antagonistic activity of CBY1. Enhances the proliferation of follicular dendritic cells. Plays a role in the mitogen-activated MAPK2/3 signaling pathway, positively regulates G1-to-S-phase transition of the cell cycle. In endothelial cells, enhances key inflammatory mediators and inflammatory response through the modulation of NF-kappaB transcriptional regulatory activity. Involved in the regulation of heat shock response, seems to play a positive feedback with HSF1 to modulate heat-shock downstream gene expression. Plays a role in the regulation of hematopoiesis even if the mechanisms are unknown. In cancers such as thyroid or lung cancer, it has been described as promoter of cell proliferation, G1-to-S-phase transition and inhibitor of apoptosis. However, it negatively regulates self-renewal of liver cancer cells via suppresion of NOTCH2 signaling. The chain is Transcriptional and immune response regulator from Mus musculus (Mouse).